Here is a 487-residue protein sequence, read N- to C-terminus: Signal recognition particle subunit SRP54 (487 aa).

Positions 1 to 295 (MVLSQLGSSL…DAESFVRKLL (295 aa)) are G-domain. GTP-binding positions include 108-115 (GLQGAGKT), 190-194 (DTSGR), and 248-251 (TKLD). Residues 296 to 487 (GMGDLKGIAK…LGGTGKKGKK (192 aa)) are M-domain.

It belongs to the GTP-binding SRP family. SRP54 subfamily. As to quaternary structure, component of a signal recognition particle (SRP) complex that consists of a 7SL RNA molecule of 300 nucleotides and six protein subunits: SRP72, SRP68, SRP54, SRP19, SRP14 and SRP9.

It is found in the cytoplasm. The protein resides in the endoplasmic reticulum. The enzyme catalyses GTP + H2O = GDP + phosphate + H(+). Functionally, component of the signal recognition particle (SRP) complex, a ribonucleoprotein complex that mediates the cotranslational targeting of secretory and membrane proteins to the endoplasmic reticulum (ER). As part of the SRP complex, associates with the SRP receptor (SR) component SRPRA to target secretory proteins to the endoplasmic reticulum membrane. Binds to the signal sequence of presecretory proteins when they emerge from the ribosomes. Displays basal GTPase activity, and stimulates reciprocal GTPase activation of the SR subunit SRPRA. Forms a guanosine 5'-triphosphate (GTP)-dependent complex with the SR subunit SRPRA. SR compaction and GTPase mediated rearrangement of SR drive SRP-mediated cotranslational protein translocation into the ER. Requires the presence of SRP9/SRP14 and/or SRP19 to stably interact with RNA. In Entamoeba histolytica (strain ATCC 30459 / HM-1:IMSS / ABRM), this protein is Signal recognition particle subunit SRP54.